Here is a 353-residue protein sequence, read N- to C-terminus: Ribosome biogenesis protein BRX1 homolog (353 aa).

A compositionally biased stretch (basic residues) spans 1–10; it reads MAATKRKRRG. Residues 1 to 46 form a disordered region; sequence MAATKRKRRGGLAVQAKKLKRDAKDGKLPAKANDVSEEAAEEEKDR. In terms of domain architecture, Brix spans 60-249; sequence ERILIFSSRG…LIKIFQGSFG (190 aa). A Glycyl lysine isopeptide (Lys-Gly) (interchain with G-Cter in SUMO2) cross-link involves residue Lys160. Phosphoserine is present on Ser261. Lys276 is modified (N6-acetyllysine). Residues Lys314 and Lys322 each participate in a glycyl lysine isopeptide (Lys-Gly) (interchain with G-Cter in SUMO2) cross-link.

It belongs to the BRX1 family.

Its subcellular location is the nucleus. The protein localises to the nucleolus. Functionally, required for biogenesis of the 60S ribosomal subunit. In Bos taurus (Bovine), this protein is Ribosome biogenesis protein BRX1 homolog (BRIX1).